The primary structure comprises 641 residues: Mediator of RNA polymerase II transcription subunit 17 (641 aa).

Residues 159–186 are a coiled coil; sequence RLQSFNAAADKLLKSAARLETEVASETR.

This sequence belongs to the Mediator complex subunit 17 family. Component of the Mediator complex.

It is found in the nucleus. In terms of biological role, component of the Mediator complex, a coactivator involved in the regulated transcription of nearly all RNA polymerase II-dependent genes. Mediator functions as a bridge to convey information from gene-specific regulatory proteins to the basal RNA polymerase II transcription machinery. Mediator is recruited to promoters by direct interactions with regulatory proteins and serves as a scaffold for the assembly of a functional preinitiation complex with RNA polymerase II and the general transcription factors. This Aspergillus clavatus (strain ATCC 1007 / CBS 513.65 / DSM 816 / NCTC 3887 / NRRL 1 / QM 1276 / 107) protein is Mediator of RNA polymerase II transcription subunit 17 (srb4).